Reading from the N-terminus, the 555-residue chain is Small ribosomal subunit protein uS3m (555 aa).

Residues 1–20 (MARKGNPISVRLGKNRSSDS) are disordered.

This sequence belongs to the universal ribosomal protein uS3 family.

Its subcellular location is the mitochondrion. The polypeptide is Small ribosomal subunit protein uS3m (RPS3) (Brassica napus (Rape)).